A 441-amino-acid polypeptide reads, in one-letter code: Chromosomal replication initiator protein DnaA (441 aa).

Residues 1 to 80 (MQNDVLARWE…MHQEISLQFI (80 aa)) form a domain I, interacts with DnaA modulators region. Positions 80 to 102 (ILAGQEVDQPKPKERSSEETYIN) are domain II. The tract at residues 103 to 320 (ILNPRYTFDT…GALIRVSAFS (218 aa)) is domain III, AAA+ region. The ATP site is built by glycine 147, glycine 149, lysine 150, and threonine 151. The domain IV, binds dsDNA stretch occupies residues 321–441 (SLEQRDATPQ…IKELKKRIGE (121 aa)).

Belongs to the DnaA family. In terms of assembly, oligomerizes as a right-handed, spiral filament on DNA at oriC.

The protein resides in the cytoplasm. Plays an essential role in the initiation and regulation of chromosomal replication. ATP-DnaA binds to the origin of replication (oriC) to initiate formation of the DNA replication initiation complex once per cell cycle. Binds the DnaA box (a 9 base pair repeat at the origin) and separates the double-stranded (ds)DNA. Forms a right-handed helical filament on oriC DNA; dsDNA binds to the exterior of the filament while single-stranded (ss)DNA is stabiized in the filament's interior. The ATP-DnaA-oriC complex binds and stabilizes one strand of the AT-rich DNA unwinding element (DUE), permitting loading of DNA polymerase. After initiation quickly degrades to an ADP-DnaA complex that is not apt for DNA replication. Binds acidic phospholipids. This is Chromosomal replication initiator protein DnaA from Desulforamulus reducens (strain ATCC BAA-1160 / DSM 100696 / MI-1) (Desulfotomaculum reducens).